Reading from the N-terminus, the 252-residue chain is MAVGKNKRLSKGKKGIKKRVVDPFSRKDWYDIKAPAFFEVKNVGKTLVNRTAGLKNANDSLKGRILEVSLADLQKDEEHSFRKVKLRVEDIQGKSCLTSFNGFDMTSDKLRSLVRKWQSTIEANQTIKTTDGYLCRIFVIGFTSRRVNQVKKTTYAQSSQIRAIHQKMFQVIQNQANGCSMKELVQKLIPEVIGRAIEKATNNIYPLQNVFVRKVKILKAPKHDAQKLLELHGESQDVGSKVISDVAPLESV.

Residue Ala2 is modified to N-acetylalanine; partial.

The protein belongs to the eukaryotic ribosomal protein eS1 family. Component of the small ribosomal subunit (SSU). Mature yeast ribosomes consist of a small (40S) and a large (60S) subunit. The 40S small subunit contains 1 molecule of ribosomal RNA (18S rRNA) and at least 33 different proteins. The large 60S subunit contains 3 rRNA molecules (25S, 5.8S and 5S rRNA) and at least 46 different proteins. eS1 interacts directly with uS11 and eS26, which form part of the mRNA exit tunnel.

The protein localises to the cytoplasm. In terms of biological role, component of the ribosome, a large ribonucleoprotein complex responsible for the synthesis of proteins in the cell. The small ribosomal subunit (SSU) binds messenger RNAs (mRNAs) and translates the encoded message by selecting cognate aminoacyl-transfer RNA (tRNA) molecules. The large subunit (LSU) contains the ribosomal catalytic site termed the peptidyl transferase center (PTC), which catalyzes the formation of peptide bonds, thereby polymerizing the amino acids delivered by tRNAs into a polypeptide chain. The nascent polypeptides leave the ribosome through a tunnel in the LSU and interact with protein factors that function in enzymatic processing, targeting, and the membrane insertion of nascent chains at the exit of the ribosomal tunnel. The protein is Small ribosomal subunit protein eS1A (rps101) of Schizosaccharomyces pombe (strain 972 / ATCC 24843) (Fission yeast).